A 110-amino-acid polypeptide reads, in one-letter code: Movement protein TGB2 (110 aa).

Residues 1 to 10 (MSGAHHLTPP) are Cytoplasmic-facing. The helical transmembrane segment at 11 to 34 (TDYGKPVLAASIGISLALLVYTAT) threads the bilayer. The Lumenal portion of the chain corresponds to 35-76 (RSTLPHVGDNLHALPHGGRYVDGTKSISYFSPSASKTRDPFP). The chain crosses the membrane as a helical span at residues 77 to 92 (FAFLLILTLSGLILLL). Over 93-110 (SRRRSNPHSCPSCGTPHA) the chain is Cytoplasmic.

It belongs to the Tymovirales TGBp2 protein family.

Its subcellular location is the host endoplasmic reticulum membrane. Its function is as follows. Plays a role in viral cell-to-cell propagation, by facilitating genome transport to neighboring plant cells through plasmosdesmata,. In Plantago asiatica (P1AMV), this protein is Movement protein TGB2.